Here is a 426-residue protein sequence, read N- to C-terminus: Protein trichome birefringence-like 19 (426 aa).

A helical; Signal-anchor for type II membrane protein transmembrane segment spans residues 15–35 (LLIAVTIATSLLTIIPLLYPL). A GDS motif motif is present at residues 142–144 (GDS). The DCXHWCLPGXXDXWN motif motif lies at 388–402 (DCVHWCLPGPIDNLN).

This sequence belongs to the PC-esterase family. TBL subfamily.

It is found in the membrane. May act as a bridging protein that binds pectin and other cell wall polysaccharides. Probably involved in maintaining esterification of pectins. May be involved in the specific O-acetylation of cell wall polymers. This Arabidopsis thaliana (Mouse-ear cress) protein is Protein trichome birefringence-like 19 (TBL19).